A 296-amino-acid chain; its full sequence is uncharacterized protein (296 aa).

Residues 129-170 (VKELKDLIRTVADEHMKMKREHEAAMKELTLLINNQKQQQQQ) are a coiled coil. Residues 165-187 (KQQQQQPVPMPRNSTATRPKNLA) are disordered.

This is an uncharacterized protein from Ostreid herpesvirus 1 (isolate France) (OsHV-1).